A 184-amino-acid chain; its full sequence is Large ribosomal subunit protein uL18 (184 aa).

The protein belongs to the universal ribosomal protein uL18 family. As to quaternary structure, part of the 50S ribosomal subunit. Contacts the 5S and 23S rRNAs.

Functionally, this is one of the proteins that bind and probably mediate the attachment of the 5S RNA into the large ribosomal subunit, where it forms part of the central protuberance. In Haloferax mediterranei (strain ATCC 33500 / DSM 1411 / JCM 8866 / NBRC 14739 / NCIMB 2177 / R-4) (Halobacterium mediterranei), this protein is Large ribosomal subunit protein uL18.